Consider the following 269-residue polypeptide: Hydroxyethylthiazole kinase (269 aa).

Met-45 serves as a coordination point for substrate. Residues Arg-121 and Thr-167 each coordinate ATP. Gly-194 contributes to the substrate binding site.

Belongs to the Thz kinase family. The cofactor is Mg(2+).

It catalyses the reaction 5-(2-hydroxyethyl)-4-methylthiazole + ATP = 4-methyl-5-(2-phosphooxyethyl)-thiazole + ADP + H(+). It functions in the pathway cofactor biosynthesis; thiamine diphosphate biosynthesis; 4-methyl-5-(2-phosphoethyl)-thiazole from 5-(2-hydroxyethyl)-4-methylthiazole: step 1/1. Catalyzes the phosphorylation of the hydroxyl group of 4-methyl-5-beta-hydroxyethylthiazole (THZ). This is Hydroxyethylthiazole kinase from Bacillus cereus (strain ATCC 14579 / DSM 31 / CCUG 7414 / JCM 2152 / NBRC 15305 / NCIMB 9373 / NCTC 2599 / NRRL B-3711).